Consider the following 761-residue polypeptide: Mitochondrial inner membrane m-AAA protease component YTA10 (761 aa).

Topologically, residues 1-115 (MMMWQRYARG…SLSEYFRSKE (115 aa)) are mitochondrial matrix. The interval 67 to 101 (SWTRLNENRPNKEGEGKNNGNKDNNSNKEDGKDKR) is disordered. Composition is skewed to basic and acidic residues over residues 72–82 (NENRPNKEGEG) and 91–101 (NSNKEDGKDKR). A helical transmembrane segment spans residues 116–136 (FANTMFLTIGFTIIFTLLTPS). Residues 137–223 (SNNSGDDSNR…IPIKYIERSS (87 aa)) are Mitochondrial intermembrane-facing. A helical transmembrane segment spans residues 224-244 (PFTFLFPFLPTIILLGGLYFI). Residues 245-761 (TRKINSSPPN…EPPEAPAATN (517 aa)) lie on the Mitochondrial matrix side of the membrane. Residues Val290, Ala291, Thr332, Gly333, Lys334, Thr335, Leu336, and His472 each contribute to the ATP site. His558 is a binding site for Zn(2+). Glu559 is a catalytic residue. Residues His562 and Asp634 each coordinate Zn(2+).

This sequence in the N-terminal section; belongs to the AAA ATPase family. In the C-terminal section; belongs to the peptidase M41 family. Component of the 850 kDa m-AAA protease complex, a heterohexamer composed of YTA12/RCA1 and YTA10/AFG3. Associates with the prohibitin complex, composed of PHB1 and PHB2, inhibiting the activity of the m-AAA protease complex. The cofactor is Zn(2+).

Its subcellular location is the mitochondrion inner membrane. It carries out the reaction ATP + H2O = ADP + phosphate + H(+). ATP hydrolysis is coordinated within m-AAA protease ring complexes: ATP-binding to YTA10/AFG3 inhibits ATP hydrolysis by the neighboring subunit YTA12/RCA1, leading to coordinated ATP hydrolysis within the AAA ATPase ring. Catalytic component of the m-AAA protease, a protease that plays a key role in proteostasis of inner mitochondrial membrane proteins. YTA10/AFG3 possesses both ATPase and protease activities: the ATPase activity is required to unfold substrates, threading them into the internal proteolytic cavity for hydrolysis into small peptide fragments. The complex is necessary for the assembly of mitochondrial respiratory chain and ATPase complexes. The m-AAA protease carries out protein quality control in the inner membrane of the mitochondria by mediating degradation of mistranslated or misfolded polypeptides. It also mediates protein maturation of the mitochondrial ribosomal subunit MRPL32/bL32m by catalyzing the cleavage of the presequence of MRPL32/bL32m prior to assembly into the mitochondrial ribosome. Promotes maturation of cytochrome c peroxidase (CCP1) by acting as a membrane protein dislocase via its ATPase activity: pulls the CCP1 transmembrane to the matrix prior to processing by the rhomboid protease PCP1. The membrane protein dislocase activity is also required to dislocate moderately hydrophobic transmembrane segments from the membrane. This chain is Mitochondrial inner membrane m-AAA protease component YTA10, found in Saccharomyces cerevisiae (strain ATCC 204508 / S288c) (Baker's yeast).